Here is a 171-residue protein sequence, read N- to C-terminus: Peptide methionine sulfoxide reductase MsrA (171 aa).

C13 is a catalytic residue.

The protein belongs to the MsrA Met sulfoxide reductase family.

It carries out the reaction L-methionyl-[protein] + [thioredoxin]-disulfide + H2O = L-methionyl-(S)-S-oxide-[protein] + [thioredoxin]-dithiol. The catalysed reaction is [thioredoxin]-disulfide + L-methionine + H2O = L-methionine (S)-S-oxide + [thioredoxin]-dithiol. Its function is as follows. Has an important function as a repair enzyme for proteins that have been inactivated by oxidation. Catalyzes the reversible oxidation-reduction of methionine sulfoxide in proteins to methionine. This is Peptide methionine sulfoxide reductase MsrA from Mycobacterium ulcerans (strain Agy99).